The sequence spans 101 residues: uncharacterized protein (101 aa).

Helical transmembrane passes span 3 to 23 (IVYEYAISTNWIWLYVWLFLF) and 39 to 59 (AFLSLPPIVSFALSVATLIFF).

Its subcellular location is the membrane. This is an uncharacterized protein from Saccharomyces cerevisiae (strain ATCC 204508 / S288c) (Baker's yeast).